The chain runs to 193 residues: Zinc finger CCHC domain-containing protein 17 (193 aa).

Residues methionine 1–lysine 40 form the S1 motif; truncated domain. Phosphoserine is present on serine 66. The CCHC-type zinc-finger motif lies at threonine 83–methionine 100. Lysine 96 is modified (N6-acetyllysine). The segment at glutamate 113–glutamate 193 is disordered. Residues glutamate 118–valine 129 are compositionally biased toward basic and acidic residues. Residues proline 134–arginine 150 are compositionally biased toward basic residues. Phosphoserine is present on serine 135. The span at aspartate 163–alanine 177 shows a compositional bias: basic and acidic residues. The span at alanine 178–glutamate 193 shows a compositional bias: basic residues.

As to quaternary structure, may interact with PNN. May associate with the 60 S ribosomal subunit.

It localises to the nucleus. It is found in the nucleolus. The sequence is that of Zinc finger CCHC domain-containing protein 17 (ZCCHC17) from Macaca fascicularis (Crab-eating macaque).